The primary structure comprises 505 residues: Putative pentatricopeptide repeat-containing protein At1g26500 (505 aa).

PPR repeat units follow at residues 145 to 179 (NDKT…GYLY), 180 to 210 (NVET…LKEF), 214 to 248 (DEIT…GFDV), 249 to 279 (DIEA…MVSK), 285 to 319 (DGGF…GVYV), 320 to 350 (DNLT…VENP), and 351 to 385 (DISI…GCEP).

This sequence belongs to the PPR family. P subfamily.

The protein is Putative pentatricopeptide repeat-containing protein At1g26500 of Arabidopsis thaliana (Mouse-ear cress).